We begin with the raw amino-acid sequence, 245 residues long: Uridylate kinase (245 aa).

20–23 provides a ligand contact to ATP; the sequence is KLSG. Gly60 is a UMP binding site. ATP-binding residues include Gly61 and Arg65. Residues Asp80 and 141–148 each bind UMP; that span reads AGLPYFST. ATP is bound by residues Tyr175 and Asp178.

Belongs to the UMP kinase family. In terms of assembly, homohexamer.

The protein localises to the cytoplasm. The catalysed reaction is UMP + ATP = UDP + ADP. Its pathway is pyrimidine metabolism; CTP biosynthesis via de novo pathway; UDP from UMP (UMPK route): step 1/1. With respect to regulation, inhibited by UTP. Functionally, catalyzes the reversible phosphorylation of UMP to UDP. The protein is Uridylate kinase of Paenarthrobacter aurescens (strain TC1).